We begin with the raw amino-acid sequence, 94 residues long: Mitochondrial import receptor subunit TOM9-1 (94 aa).

The Cytoplasmic segment spans residues 1–48 (MAPKKIGAGKGDSSILAKISNYDIVSQGRRAACDAVYVSKKLLKSTGK). Residues 49–66 (AAWIAGTTFLILAVPLIL) traverse the membrane as a helical segment. At 67–94 (ELEQDHRLGEIDFEQASLLGTPPVGAML) the chain is on the mitochondrial intermembrane side.

It belongs to the Tom22 family. As to quaternary structure, forms part of the preprotein translocase complex of the outer mitochondrial membrane (TOM complex) which consists of at least 6 different proteins (TOM5, TOM6, TOM7, TOM20, TOM22/TOM9 and TOM40). Expressed in roots, flowers, young cotyledons and leaves.

Its subcellular location is the mitochondrion outer membrane. In terms of biological role, central component of the receptor complex responsible for the recognition and translocation of cytosolically synthesized mitochondrial preproteins. Together with TOM20 functions as the transit peptide receptor at the surface of the mitochondrion outer membrane and facilitates the movement of preproteins into the translocation pore. This Arabidopsis thaliana (Mouse-ear cress) protein is Mitochondrial import receptor subunit TOM9-1 (TOM9-1).